Reading from the N-terminus, the 335-residue chain is tRNA N6-adenosine threonylcarbamoyltransferase (335 aa).

Positions 111, 115, and 132 each coordinate Fe cation. Residues 132-136 (YVSGG), Asp-164, Gly-177, Glu-181, and Asn-260 each bind substrate. Residue Asp-288 coordinates Fe cation.

Belongs to the KAE1 / TsaD family. Monomer. Component of the KEOPS complex that consists of Kae1, Bud32, Cgi121 and Pcc1; the whole complex dimerizes. Fe(2+) serves as cofactor.

It is found in the cytoplasm. The enzyme catalyses L-threonylcarbamoyladenylate + adenosine(37) in tRNA = N(6)-L-threonylcarbamoyladenosine(37) in tRNA + AMP + H(+). In terms of biological role, required for the formation of a threonylcarbamoyl group on adenosine at position 37 (t(6)A37) in tRNAs that read codons beginning with adenine. Is a component of the KEOPS complex that is probably involved in the transfer of the threonylcarbamoyl moiety of threonylcarbamoyl-AMP (TC-AMP) to the N6 group of A37. Kae1 likely plays a direct catalytic role in this reaction, but requires other protein(s) of the complex to fulfill this activity. The polypeptide is tRNA N6-adenosine threonylcarbamoyltransferase (Methanococcoides burtonii (strain DSM 6242 / NBRC 107633 / OCM 468 / ACE-M)).